We begin with the raw amino-acid sequence, 535 residues long: NAD(P)H-quinone oxidoreductase chain 4 2 (535 aa).

A run of 14 helical transmembrane segments spans residues 9-29 (FPWL…IPLI), 51-71 (WFAL…FYVG), 106-126 (LILL…PVTL), 130-150 (LFYF…AVQD), 152-172 (LLFF…LSIW), 184-204 (FILY…AMAF), 227-247 (LLLY…FPLH), 258-278 (TAPV…YALM), 290-310 (LYFA…AALT), 326-346 (ISHM…GMSG), 347-367 (AMLQ…LVGA), 399-419 (LASL…VFIG), 432-452 (LVVV…LLSM), and 479-499 (VFII…PKLV).

Belongs to the complex I subunit 4 family.

It is found in the cellular thylakoid membrane. The enzyme catalyses a plastoquinone + NADH + (n+1) H(+)(in) = a plastoquinol + NAD(+) + n H(+)(out). It catalyses the reaction a plastoquinone + NADPH + (n+1) H(+)(in) = a plastoquinol + NADP(+) + n H(+)(out). Functionally, NDH-1 shuttles electrons from NAD(P)H, via FMN and iron-sulfur (Fe-S) centers, to quinones in the respiratory chain. The immediate electron acceptor for the enzyme in this species is believed to be plastoquinone. Couples the redox reaction to proton translocation (for every two electrons transferred, four hydrogen ions are translocated across the cytoplasmic membrane), and thus conserves the redox energy in a proton gradient. The sequence is that of NAD(P)H-quinone oxidoreductase chain 4 2 from Synechococcus sp. (strain JA-3-3Ab) (Cyanobacteria bacterium Yellowstone A-Prime).